A 511-amino-acid chain; its full sequence is MEKFEGYSEKQKSRQQYFVYPLLFQEYIYAFAHDYGLNGSEPVEIVSWNNKKFSSLLVKRLIIRMYQQNFLDNSVNHPNQDRLLDYKIFFYSEFYSQILSEGFAIVVEIPFSLRELSCPKEKEIPKFQNLRSIHSIFPFLEDKFLHLDYLSHIEIPYPIHLEILVQLLQYRIQDVPSLHLLRFFLNYYSNWNSFITSMKSILFFQKENKRLVKFLYNSYVSEYEFFLLFLRKQSSCLPLAYSGTFLERIHFSRKMEHFGIMYPGFSRKTLWFFMDPLIHYVRYQGKAILASKGSFFLKKKWKCYLINFWQYYFFFWTQPRRIHINQLANSCFDFMGYLSSVPKSPLLVRNQMLENSFLIDTRMKKFDTIVPATLLIGYLSKAQFCTGSGHPISKPIWTDLSDWDILDRFGRICRNLFHYHSGSSKKRTLYRLKYILRLSCARTLARKHKSTVRTFMQRLGSAFLEEFFTEEEQVFSLMFTKTTLFSFSGSHTERIWYLDIIGINDLVNPLN.

This sequence belongs to the intron maturase 2 family. MatK subfamily.

Its subcellular location is the plastid. It localises to the chloroplast. In terms of biological role, usually encoded in the trnK tRNA gene intron. Probably assists in splicing its own and other chloroplast group II introns. In Hordeum vulgare subsp. spontaneum (Wild barley), this protein is Maturase K.